The primary structure comprises 495 residues: 3-octaprenyl-4-hydroxybenzoate carboxy-lyase (495 aa).

Asn-172 is a Mn(2+) binding site. Residues 175–177 (IYR), 189–191 (RWL), and 194–195 (RG) each bind prenylated FMN. Glu-238 provides a ligand contact to Mn(2+). The Proton donor role is filled by Asp-287.

Belongs to the UbiD family. Homohexamer. The cofactor is prenylated FMN. Mn(2+) serves as cofactor.

The protein localises to the cell membrane. The enzyme catalyses a 4-hydroxy-3-(all-trans-polyprenyl)benzoate + H(+) = a 2-(all-trans-polyprenyl)phenol + CO2. It participates in cofactor biosynthesis; ubiquinone biosynthesis. Its function is as follows. Catalyzes the decarboxylation of 3-octaprenyl-4-hydroxy benzoate to 2-octaprenylphenol, an intermediate step in ubiquinone biosynthesis. The polypeptide is 3-octaprenyl-4-hydroxybenzoate carboxy-lyase (Yersinia pseudotuberculosis serotype O:1b (strain IP 31758)).